The chain runs to 464 residues: Leucine-rich repeat-containing protein 34 (464 aa).

Residues 1-48 form a disordered region; that stretch reads MAAQPPRPVGERSMGSSREAARAPARSPAWASTQASTPGAALAVQRES. Residues 16 to 32 are compositionally biased toward low complexity; the sequence is SSREAARAPARSPAWAS. 2 LRR repeats span residues 295–315 and 323–345; these read SLRY…VYLA and TLEV…LSET.

In terms of assembly, interacts with NPM1 and NCL.

The protein resides in the nucleus. It is found in the nucleolus. Its subcellular location is the cytoplasm. Highly expressed in stem cells where it may be involved in regulation of pluripotency. In embryonic stem cells (ESCs), important for normal expression of the pluripotency regulators POU5F1/OCT4 and KLF4. Also important for expression of the ectodermal marker gene NES and the endodermal marker gene GATA4. Promotes stem cell proliferation in vitro. This is Leucine-rich repeat-containing protein 34 (LRRC34) from Homo sapiens (Human).